The following is a 321-amino-acid chain: Pirin-like protein 2 (321 aa).

Fe cation is bound by residues histidine 88, histidine 90, histidine 132, and glutamate 134.

Belongs to the pirin family. As to quaternary structure, interacts with RD21A, RD21B and XCP2.

It is found in the cytoplasm. The protein resides in the cytosol. Its subcellular location is the nucleus. In terms of biological role, involved in susceptibility to the bacterial plant pathogen Ralstonia solanacearum. Stabilizes the xylem cysteine protease XCP2 by blocking its autolysis. The sequence is that of Pirin-like protein 2 from Arabidopsis thaliana (Mouse-ear cress).